The sequence spans 184 residues: dCTP deaminase (184 aa).

Residues 107 to 112 (KSTYAR), 131 to 133 (TLE), Gln-152, Tyr-166, and Gln-176 each bind dCTP. Catalysis depends on Glu-133, which acts as the Proton donor/acceptor.

The protein belongs to the dCTP deaminase family. As to quaternary structure, homotrimer.

It carries out the reaction dCTP + H2O + H(+) = dUTP + NH4(+). It functions in the pathway pyrimidine metabolism; dUMP biosynthesis; dUMP from dCTP (dUTP route): step 1/2. In terms of biological role, catalyzes the deamination of dCTP to dUTP. The chain is dCTP deaminase from Paramagnetospirillum magneticum (strain ATCC 700264 / AMB-1) (Magnetospirillum magneticum).